Here is a 451-residue protein sequence, read N- to C-terminus: Arginine biosynthesis bifunctional protein ArgJ, mitochondrial (451 aa).

The substrate site is built by T180, K209, T220, E307, N446, and T451. The active-site Nucleophile is T220.

Belongs to the ArgJ family. Heterodimer of an alpha and a beta chain. In terms of processing, the alpha and beta chains are autoproteolytically processed from a single precursor protein within the mitochondrion.

The protein resides in the mitochondrion matrix. The catalysed reaction is N(2)-acetyl-L-ornithine + L-glutamate = N-acetyl-L-glutamate + L-ornithine. The enzyme catalyses L-glutamate + acetyl-CoA = N-acetyl-L-glutamate + CoA + H(+). It functions in the pathway amino-acid biosynthesis; L-arginine biosynthesis; L-ornithine and N-acetyl-L-glutamate from L-glutamate and N(2)-acetyl-L-ornithine (cyclic): step 1/1. The protein operates within amino-acid biosynthesis; L-arginine biosynthesis; N(2)-acetyl-L-ornithine from L-glutamate: step 1/4. Functionally, catalyzes two activities which are involved in the cyclic version of arginine biosynthesis: the synthesis of acetylglutamate from glutamate and acetyl-CoA, and of ornithine by transacetylation between acetylornithine and glutamate. In Fusarium vanettenii (strain ATCC MYA-4622 / CBS 123669 / FGSC 9596 / NRRL 45880 / 77-13-4) (Fusarium solani subsp. pisi), this protein is Arginine biosynthesis bifunctional protein ArgJ, mitochondrial.